Here is a 640-residue protein sequence, read N- to C-terminus: MPPKEAPKKWKAPKGPKPTHRKNKNKLELGRAIKYARQKENAIEYLPDGEMRFTTDKHEANWVKLRSVTQESALDEFLSTAALADKDFTADRHSNVKIIRMDSGNDSATSQGFSMTNEQRGNLNAKQRALAKDLIVPRRPEWNEGMSKFQLDRQEKEAFLEWRRKLAHLQESNEDLLLTPFERNIEVWKQLWRVVERSDLVVQIVDARNPLLFRSVDLERYVKESDDRKANLLLVNKADLLTKKQRIAWAKYFISKNISFTFYSALRANQLLEKQKEMGEDYREQDFEEADKEGFDADEKVMEKVKILSIDQLEELFLSKAPNEPLLPPLPGQPPLINIGLVGYPNVGKSSTINSLVGAKKVSVSSTPGKTKHFQTIKLSDSVMLCDCPGLVFPNFAYNKGELVCNGVLPIDQLRDYIGPAGLVAERIPKYYIEAIYGIHIQTKSRDEGGNGDIPTAQELLVAYARARGYMTQGYGSADEPRASRYILKDYVNGKLLYVNPPPHLEDDTPYTREECEEFNKDLYVFDRLPDTRKEQVQNAAKAKGIDIVDLARDLNQLTFSAHTGGDTQKEAKSVTHGGKQAALYNAAEDLDRDFFKMNNVEGRLSTPFHKVQNSSAGKRHNKKNKSKNAKSKVFSIENN.

Positions 1 to 26 (MPPKEAPKKWKAPKGPKPTHRKNKNK) are disordered. A compositionally biased stretch (basic residues) spans 9–24 (KWKAPKGPKPTHRKNK). Serine 103 is subject to Phosphoserine. Positions 188 to 394 (WKQLWRVVER…LCDCPGLVFP (207 aa)) constitute a CP-type G domain. GTP is bound by residues 236–239 (NKAD), 343–350 (GYPNVGKS), and 387–390 (DCPG). A disordered region spans residues 607 to 640 (TPFHKVQNSSAGKRHNKKNKSKNAKSKVFSIENN). Residues 618-631 (GKRHNKKNKSKNAK) are compositionally biased toward basic residues.

It belongs to the TRAFAC class YlqF/YawG GTPase family. LSG1 subfamily. Associates with the 60S ribosomal subunit. Interacts with ARB1.

Its subcellular location is the cytoplasm. Functionally, GTPase required for the nuclear export of the 60S ribosomal subunit. Acts by mediating the release of NMD3 from the 60S ribosomal subunit after export into the cytoplasm. The sequence is that of Large subunit GTPase 1 (LSG1) from Saccharomyces cerevisiae (strain ATCC 204508 / S288c) (Baker's yeast).